A 172-amino-acid polypeptide reads, in one-letter code: Endoribonuclease YbeY (172 aa).

Residues histidine 136, histidine 140, and histidine 146 each coordinate Zn(2+).

This sequence belongs to the endoribonuclease YbeY family. Requires Zn(2+) as cofactor.

It localises to the cytoplasm. Single strand-specific metallo-endoribonuclease involved in late-stage 70S ribosome quality control and in maturation of the 3' terminus of the 16S rRNA. This is Endoribonuclease YbeY from Rickettsia canadensis (strain McKiel).